The following is a 375-amino-acid chain: Trichodiene synthase (375 aa).

Belongs to the trichodiene synthase family.

The enzyme catalyses (2E,6E)-farnesyl diphosphate = trichodiene + diphosphate. It functions in the pathway sesquiterpene biosynthesis; trichothecene biosynthesis. Its function is as follows. TS is a member of the terpene cyclase group of enzymes. It catalyzes the isomerization and cyclization of farnesyl pyro-phosphate to form trichodiene, the first cyclic intermediate in the biosynthetic pathway for trichothecenes. It serves to branch trichothecene biosynthesis from the isoprenoid pathway. The protein is Trichodiene synthase (TRI5) of Fusarium mesoamericanum.